Consider the following 301-residue polypeptide: Probable alpha-L-glutamate ligase (301 aa).

The 184-residue stretch at 104–287 (LQLLSRKGIG…VADEIIRFIE (184 aa)) folds into the ATP-grasp domain. ATP is bound by residues Lys-141, 178–179 (EF), Asp-187, and 211–213 (RSN). Mg(2+)-binding residues include Asp-248, Glu-260, and Asn-262. Residues Asp-248, Glu-260, and Asn-262 each contribute to the Mn(2+) site.

The protein belongs to the RimK family. Mg(2+) serves as cofactor. It depends on Mn(2+) as a cofactor.

This Syntrophotalea carbinolica (strain DSM 2380 / NBRC 103641 / GraBd1) (Pelobacter carbinolicus) protein is Probable alpha-L-glutamate ligase.